A 101-amino-acid chain; its full sequence is Integration host factor subunit beta (101 aa).

The segment at 58-101 (ARAGRNPRTGAHVPVDQKSVPFFKTGKEMRERLNRDTGAPDSGA) is disordered. A compositionally biased stretch (basic and acidic residues) spans 82–92 (TGKEMRERLNR).

This sequence belongs to the bacterial histone-like protein family. Heterodimer of an alpha and a beta chain.

This protein is one of the two subunits of integration host factor, a specific DNA-binding protein that functions in genetic recombination as well as in transcriptional and translational control. The protein is Integration host factor subunit beta of Rhodopseudomonas palustris (strain BisB18).